A 4462-amino-acid chain; its full sequence is Dynein axonemal heavy chain 17 (4462 aa).

The interval 1 to 1808 (MTMAPDVRLE…FANICDAQIQ (1808 aa)) is stem. TPR repeat units follow at residues 1019 to 1052 (TWTD…VSKC) and 1702 to 1736 (IWWT…QLNV). AAA stretches follow at residues 1809–2030 (YSYE…VLVV), 2090–2311 (KIIK…FGFK), 2417–2665 (ELDP…IFQG), and 2763–3012 (SYNE…ERRY). ATP contacts are provided by residues 1847-1854 (GPAGTGKT), 2128-2135 (GNAGSGKS), 2455-2462 (GNAGTGKS), and 2801-2808 (GVGGSGKQ). Coiled-coil stretches lie at residues 3027-3086 (YQNL…LIQV) and 3257-3309 (DVAP…EKIK). Residues 3027–3313 (YQNLLAKKRT…TAEKIKCQQE (287 aa)) form a stalk region. AAA regions lie at residues 3405–3632 (LTDD…EIEE) and 3842–4068 (IKNF…VLYN). Residues 4147–4182 (PESPYLYGLHPNAEIGFLTVTSEKLFRTVLEMQPKE) form a TPR 3 repeat.

Belongs to the dynein heavy chain family. In terms of assembly, consists of at least two heavy chains and a number of intermediate and light chains. As to expression, expressed in testis. Expressed in spermatozoa (at protein level). Not detected in airway epithelial cells (at protein level).

It localises to the cytoplasm. The protein resides in the cytoskeleton. It is found in the flagellum axoneme. Force generating protein component of the outer dynein arms (ODAs) in the sperm flagellum. Produces force towards the minus ends of microtubules. Dynein has ATPase activity; the force-producing power stroke is thought to occur on release of ADP. Plays a major role in sperm motility, implicated in sperm flagellar assembly and beating. The chain is Dynein axonemal heavy chain 17 from Homo sapiens (Human).